The following is a 605-amino-acid chain: Elongation factor 4 (605 aa).

One can recognise a tr-type G domain in the interval 8–190 (RRVRNFCIVA…AIITRIPPPQ (183 aa)). Residues 20-25 (DHGKST) and 137-140 (NKID) contribute to the GTP site.

It belongs to the TRAFAC class translation factor GTPase superfamily. Classic translation factor GTPase family. LepA subfamily.

It is found in the cell inner membrane. The catalysed reaction is GTP + H2O = GDP + phosphate + H(+). In terms of biological role, required for accurate and efficient protein synthesis under certain stress conditions. May act as a fidelity factor of the translation reaction, by catalyzing a one-codon backward translocation of tRNAs on improperly translocated ribosomes. Back-translocation proceeds from a post-translocation (POST) complex to a pre-translocation (PRE) complex, thus giving elongation factor G a second chance to translocate the tRNAs correctly. Binds to ribosomes in a GTP-dependent manner. This chain is Elongation factor 4, found in Treponema pallidum (strain Nichols).